The following is a 932-amino-acid chain: Protocadherin gamma-A9 (932 aa).

The N-terminal stretch at 1-28 (MAAPTKCQLRGRLVLLCSLLGMLWEARA) is a signal peptide. Cadherin domains lie at 29-133 (SQIR…APKF), 134-242 (QAES…APVF), 243-347 (AQRI…RPEV), 348-452 (TITS…PPAF), 453-562 (SQAS…APEI), and 570-683 (DGST…IPAD). Topologically, residues 29–692 (SQIRYSVPEE…DLEASDLTLY (664 aa)) are extracellular. N-linked (GlcNAc...) asparagine glycans are attached at residues Asn47 and Asn127. 3 N-linked (GlcNAc...) asparagine glycosylation sites follow: Asn389, Asn419, and Asn545. The chain crosses the membrane as a helical span at residues 693–713 (LVVAVAVVSCVFLTFVITLLA). The Cytoplasmic portion of the chain corresponds to 714–932 (LRLRHWHSSH…KKKSGKKEKK (219 aa)). 2 disordered regions span residues 803–841 (DTPLVPQAPPNTDWRFSQAQRPGTSGSQNGDDTGTWPNN) and 902–932 (ATLTNAAGKRDGKAPAGGNGNKKKSGKKEKK). The span at 816-841 (WRFSQAQRPGTSGSQNGDDTGTWPNN) shows a compositional bias: polar residues. Residues 922–932 (NKKKSGKKEKK) show a composition bias toward basic residues.

Its subcellular location is the cell membrane. Functionally, potential calcium-dependent cell-adhesion protein. May be involved in the establishment and maintenance of specific neuronal connections in the brain. This is Protocadherin gamma-A9 (PCDHGA9) from Homo sapiens (Human).